A 340-amino-acid polypeptide reads, in one-letter code: ATP synthase subunit a (340 aa).

Residues 1–32 (MKRVNVIQAKAFLKVIALLVPLLLNANGPAFA) form the signal peptide. The next 6 membrane-spanning stretches (helical) occupy residues 107-127 (HVVM…LVGS), 172-192 (LLTV…PYGA), 197-217 (NINV…VAAL), 236-256 (ALWI…PVAL), 269-289 (IVIL…VAVV), and 296-316 (IFIY…FTML).

It belongs to the ATPase A chain family. F-type ATPases have 2 components, CF(1) - the catalytic core - and CF(0) - the membrane proton channel. CF(1) has five subunits: alpha(3), beta(3), gamma(1), delta(1), epsilon(1). CF(0) has four main subunits: a, b, b' and c.

The protein localises to the cell inner membrane. Its function is as follows. Key component of the proton channel; it plays a direct role in the translocation of protons across the membrane. The chain is ATP synthase subunit a from Pelodictyon phaeoclathratiforme (strain DSM 5477 / BU-1).